A 485-amino-acid polypeptide reads, in one-letter code: Aspartyl/glutamyl-tRNA(Asn/Gln) amidotransferase subunit B (485 aa).

This sequence belongs to the GatB/GatE family. GatB subfamily. In terms of assembly, heterotrimer of A, B and C subunits.

It catalyses the reaction L-glutamyl-tRNA(Gln) + L-glutamine + ATP + H2O = L-glutaminyl-tRNA(Gln) + L-glutamate + ADP + phosphate + H(+). It carries out the reaction L-aspartyl-tRNA(Asn) + L-glutamine + ATP + H2O = L-asparaginyl-tRNA(Asn) + L-glutamate + ADP + phosphate + 2 H(+). In terms of biological role, allows the formation of correctly charged Asn-tRNA(Asn) or Gln-tRNA(Gln) through the transamidation of misacylated Asp-tRNA(Asn) or Glu-tRNA(Gln) in organisms which lack either or both of asparaginyl-tRNA or glutaminyl-tRNA synthetases. The reaction takes place in the presence of glutamine and ATP through an activated phospho-Asp-tRNA(Asn) or phospho-Glu-tRNA(Gln). The chain is Aspartyl/glutamyl-tRNA(Asn/Gln) amidotransferase subunit B from Borrelia recurrentis (strain A1).